Consider the following 428-residue polypeptide: Serine hydroxymethyltransferase (428 aa).

(6S)-5,6,7,8-tetrahydrofolate contacts are provided by residues Leu-117 and 121–123 (GHL). Position 226 is an N6-(pyridoxal phosphate)lysine (Lys-226).

Belongs to the SHMT family. Homodimer. Pyridoxal 5'-phosphate is required as a cofactor.

Its subcellular location is the cytoplasm. It catalyses the reaction (6R)-5,10-methylene-5,6,7,8-tetrahydrofolate + glycine + H2O = (6S)-5,6,7,8-tetrahydrofolate + L-serine. It functions in the pathway one-carbon metabolism; tetrahydrofolate interconversion. The protein operates within amino-acid biosynthesis; glycine biosynthesis; glycine from L-serine: step 1/1. Catalyzes the reversible interconversion of serine and glycine with tetrahydrofolate (THF) serving as the one-carbon carrier. This reaction serves as the major source of one-carbon groups required for the biosynthesis of purines, thymidylate, methionine, and other important biomolecules. Also exhibits THF-independent aldolase activity toward beta-hydroxyamino acids, producing glycine and aldehydes, via a retro-aldol mechanism. The sequence is that of Serine hydroxymethyltransferase from Aquifex aeolicus (strain VF5).